A 103-amino-acid chain; its full sequence is Large ribosomal subunit protein bL21 (103 aa).

Belongs to the bacterial ribosomal protein bL21 family. In terms of assembly, part of the 50S ribosomal subunit. Contacts protein L20.

Functionally, this protein binds to 23S rRNA in the presence of protein L20. In Dechloromonas aromatica (strain RCB), this protein is Large ribosomal subunit protein bL21.